A 610-amino-acid chain; its full sequence is Pentatricopeptide repeat-containing protein At5g40400 (610 aa).

PPR repeat units lie at residues aspartate 165–valine 199, serine 200–proline 234, asparagine 235–proline 269, aspartate 270–proline 304, aspartate 305–proline 339, aspartate 340–proline 374, aspartate 375–isoleucine 409, proline 410–alanine 445, lysine 446–leucine 480, aspartate 481–proline 515, aspartate 516–glutamate 546, and aspartate 551–proline 586.

Belongs to the PPR family. P subfamily.

This chain is Pentatricopeptide repeat-containing protein At5g40400, found in Arabidopsis thaliana (Mouse-ear cress).